Reading from the N-terminus, the 157-residue chain is MSKHKVSPATIAKNKKALHDYTILEKFEAGIVLQGWEVKSIRAGKVQMVDSHVHIKHGEAWLFNCLITPLLSASTHVVADAAATRKLLLNRREINKIMGRIEQKGFTCIPLSMYWKGPRVKVEIALAQGKKVHDKRQAQKDKDWAREKDRLFKKAYK.

The segment at 132-157 is disordered; it reads VHDKRQAQKDKDWAREKDRLFKKAYK. Residues 135-157 are compositionally biased toward basic and acidic residues; it reads KRQAQKDKDWAREKDRLFKKAYK.

The protein belongs to the SmpB family.

Its subcellular location is the cytoplasm. Its function is as follows. Required for rescue of stalled ribosomes mediated by trans-translation. Binds to transfer-messenger RNA (tmRNA), required for stable association of tmRNA with ribosomes. tmRNA and SmpB together mimic tRNA shape, replacing the anticodon stem-loop with SmpB. tmRNA is encoded by the ssrA gene; the 2 termini fold to resemble tRNA(Ala) and it encodes a 'tag peptide', a short internal open reading frame. During trans-translation Ala-aminoacylated tmRNA acts like a tRNA, entering the A-site of stalled ribosomes, displacing the stalled mRNA. The ribosome then switches to translate the ORF on the tmRNA; the nascent peptide is terminated with the 'tag peptide' encoded by the tmRNA and targeted for degradation. The ribosome is freed to recommence translation, which seems to be the essential function of trans-translation. The chain is SsrA-binding protein from Francisella tularensis subsp. tularensis (strain FSC 198).